The sequence spans 421 residues: UPF0415 protein C7orf25 homolog (421 aa).

It belongs to the UPF0415 family.

In Rattus norvegicus (Rat), this protein is UPF0415 protein C7orf25 homolog.